The sequence spans 718 residues: Cyclomaltodextrin glucanotransferase (718 aa).

The N-terminal stretch at 1-34 (MFQMAKRAFLSTTLTLGLLAGSALPFLPASAAYA) is a signal peptide. The A1 stretch occupies residues 35 to 172 (DPDIAVTNKQ…GIKIIIDFAP (138 aa)). Positions 61, 63, 66, and 67 each coordinate Ca(2+). A disulfide bridge connects residues Cys-77 and Cys-84. Residues Gly-85 and Asp-87 each coordinate Ca(2+). Substrate is bound at residue 134–135 (YW). Asn-173 is a binding site for Ca(2+). Residues 173-236 (NHTSPAMETD…NLYDLADFNH (64 aa)) are b. Substrate is bound at residue His-174. Ca(2+) is bound at residue Ile-224. 227–230 (NLYD) contributes to the substrate binding site. Asp-233 lines the Ca(2+) pocket. Positions 237–440 (NNATIDKYFK…LRKSNPAIAY (204 aa)) are A2. A substrate-binding site is contributed by Arg-261. The Nucleophile role is filled by Asp-263. A substrate-binding site is contributed by 266–267 (KH). Ca(2+) is bound at residue His-267. The active-site Proton donor is the Glu-291. Residues His-361, Asp-405, and Arg-409 each contribute to the substrate site. The interval 441 to 528 (GSTQQRWINN…ATAVWQYTAA (88 aa)) is c. Positions 529-614 (ETTPTIGHVG…SNAYNHFTIL (86 aa)) are d. Residues 532-612 (PTIGHVGPVM…VNSNAYNHFT (81 aa)) enclose the IPT/TIG domain. Residues 613–718 (ILTGDQVTVR…GTATVTVNWQ (106 aa)) enclose the CBM20 domain. Residues 615 to 718 (TGDQVTVRFV…GTATVTVNWQ (104 aa)) are e.

This sequence belongs to the glycosyl hydrolase 13 family. As to quaternary structure, monomer. It depends on Ca(2+) as a cofactor.

The protein localises to the secreted. It catalyses the reaction Cyclizes part of a (1-&gt;4)-alpha-D-glucan chain by formation of a (1-&gt;4)-alpha-D-glucosidic bond.. This is Cyclomaltodextrin glucanotransferase (cgt) from Bacillus sp. (strain 6.6.3).